An 87-amino-acid chain; its full sequence is Cx9C motif-containing protein 4, mitochondrial (87 aa).

The CHCH domain occupies 9–51 (ENACKPFACAIQDCLIENGYNESKCTKAIDNLYKCCKQFYEEN). 2 consecutive short sequence motifs (cx9C motif) follow at residues 12 to 22 (CKPFACAIQDC) and 33 to 43 (CTKAIDNLYKC). 2 disulfide bridges follow: C12–C43 and C22–C33.

It belongs to the CMC4 family.

It localises to the mitochondrion intermembrane space. This chain is Cx9C motif-containing protein 4, mitochondrial (CMC4), found in Clavispora lusitaniae (strain ATCC 42720) (Yeast).